The following is a 290-amino-acid chain: Virginiamycin B lyase (290 aa).

Position 226 (H226) interacts with substrate. E265 lines the Mg(2+) pocket. Catalysis depends on H267, which acts as the Proton acceptor. E282 lines the Mg(2+) pocket.

It belongs to the Vgb family. In terms of assembly, monomer. Mg(2+) serves as cofactor.

Inactivates the type B streptogramin antibiotics by linearizing the lactone ring at the ester linkage, generating a free phenylglycine carboxylate and converting the threonyl moiety into 2-amino-butenoic acid. The polypeptide is Virginiamycin B lyase (Mycolicibacterium vanbaalenii (strain DSM 7251 / JCM 13017 / BCRC 16820 / KCTC 9966 / NRRL B-24157 / PYR-1) (Mycobacterium vanbaalenii)).